A 287-amino-acid polypeptide reads, in one-letter code: Ribosomal RNA small subunit methyltransferase A (287 aa).

S-adenosyl-L-methionine contacts are provided by asparagine 18, leucine 20, glycine 45, glutamate 66, aspartate 91, and asparagine 118.

This sequence belongs to the class I-like SAM-binding methyltransferase superfamily. rRNA adenine N(6)-methyltransferase family. RsmA subfamily.

The protein resides in the cytoplasm. It carries out the reaction adenosine(1518)/adenosine(1519) in 16S rRNA + 4 S-adenosyl-L-methionine = N(6)-dimethyladenosine(1518)/N(6)-dimethyladenosine(1519) in 16S rRNA + 4 S-adenosyl-L-homocysteine + 4 H(+). Specifically dimethylates two adjacent adenosines (A1518 and A1519) in the loop of a conserved hairpin near the 3'-end of 16S rRNA in the 30S particle. May play a critical role in biogenesis of 30S subunits. The sequence is that of Ribosomal RNA small subunit methyltransferase A from Haemophilus influenzae (strain ATCC 51907 / DSM 11121 / KW20 / Rd).